Here is a 498-residue protein sequence, read N- to C-terminus: Beta-amylase 5 (498 aa).

Positions 56, 96, and 104 each coordinate substrate. Glu189 serves as the catalytic Proton donor. 3 residues coordinate substrate: Lys298, His303, and Thr345. Glu383 serves as the catalytic Proton acceptor. Substrate is bound by residues 384 to 385 and Arg423; that span reads NA.

The protein belongs to the glycosyl hydrolase 14 family. In terms of tissue distribution, detected in phloem sieve elements.

It localises to the cytoplasm. It catalyses the reaction Hydrolysis of (1-&gt;4)-alpha-D-glucosidic linkages in polysaccharides so as to remove successive maltose units from the non-reducing ends of the chains.. Functionally, beta-amylase activity. Major cytosolic beta-amylase isoform in rosette leaves and inflorescences stems. In Arabidopsis thaliana (Mouse-ear cress), this protein is Beta-amylase 5 (BAM5).